We begin with the raw amino-acid sequence, 544 residues long: Inward rectifier potassium channel irk-1 (544 aa).

The Cytoplasmic portion of the chain corresponds to 1 to 109 (MTLSVPDCAE…IFTTMIDVKW (109 aa)). The chain crosses the membrane as a helical span at residues 110–134 (RWMLMLFASAFVLSWSIFGTTYYLI). Topologically, residues 135-158 (ALVHGDLSLPTPVNHTACVMNLDS) are extracellular. The helical; Pore-forming intramembrane region spans 159–170 (VYSSFLFAVETH). An intramembrane region (pore-forming) is located at residues 171-177 (HTIGYGH). A Selectivity filter motif is present at residues 172–177 (TIGYGH). Residues 178 to 186 (RYITTECYL) are Extracellular-facing. A helical transmembrane segment spans residues 187–208 (AGAIVCLQAICALLLQSFMVGI). Residues 209–544 (VFAKMARPKK…PIHIEIVSET (336 aa)) lie on the Cytoplasmic side of the membrane. Disordered stretches follow at residues 411-448 (HKLE…NSPV) and 512-533 (LSDL…SPPV). Residues 438–448 (NHFQSSSNSPV) are compositionally biased toward polar residues.

Belongs to the inward rectifier-type potassium channel (TC 1.A.2.1) family. Expressed in neurons in the head and tail with no expression detected in non-neuronal cells in these regions. Also detected in the egg-laying system of adult hermaphordites with strong expression in the HSN motor neurons and weak expression in vulval muscles.

The protein localises to the membrane. Its subcellular location is the perikaryon. It is found in the cell projection. In terms of biological role, inward rectifier potassium channels are characterized by a greater tendency to allow potassium to flow into the cell rather than out of it. Required for modulation of the activity of the hermaphrodite-specific neurons (HSNs) by the G-protein coupled neuropeptide receptor egl-6 which in turn controls egg-laying behavior. The polypeptide is Inward rectifier potassium channel irk-1 (irk-1) (Caenorhabditis elegans).